A 121-amino-acid polypeptide reads, in one-letter code: uncharacterized protein (121 aa).

Disordered stretches follow at residues 1 to 28 (MGCASAKHVATVQNEEEAQRGKSYQNGD) and 60 to 81 (QENLEKSASSNTRLKTNKEIPG). Phosphoserine is present on residues Ser95 and Ser115.

This is an uncharacterized protein from Mus musculus (Mouse).